The following is a 386-amino-acid chain: Small ribosomal subunit protein mS31 (386 aa).

The protein belongs to the mitochondrion-specific ribosomal protein mS31 family. Component of the mitochondrial ribosome small subunit (28S) which comprises a 12S rRNA and about 30 distinct proteins.

The protein resides in the mitochondrion. The sequence is that of Small ribosomal subunit protein mS31 (MRPS31) from Bos taurus (Bovine).